The primary structure comprises 819 residues: Leucine--tRNA ligase (819 aa).

A 'HIGH' region motif is present at residues 51–61 (PYPSGNLHIGH). The short motif at 586–590 (KMSKS) is the 'KMSKS' region element. Lys589 lines the ATP pocket.

This sequence belongs to the class-I aminoacyl-tRNA synthetase family.

The protein resides in the cytoplasm. It carries out the reaction tRNA(Leu) + L-leucine + ATP = L-leucyl-tRNA(Leu) + AMP + diphosphate. The sequence is that of Leucine--tRNA ligase from Deinococcus geothermalis (strain DSM 11300 / CIP 105573 / AG-3a).